A 184-amino-acid chain; its full sequence is MQGPHDFHTPKSSYSKEDLLESGKGGYFGPGNAQLPAPPMLMMDRITEISLDGGAFGKGHVVGELDITPDLWFFQCHFPGDPVMPGCLGLDAMWQIVGYWLGWSGSPGKGRALGVGEVKFTGEITPDKKLVRYEIDIKRVRRGKLNLGIADGRVYVDGEHVYTAIDMKVGLKNVLGGAGDLPAS.

Residue His-77 is part of the active site.

Belongs to the thioester dehydratase family. FabA subfamily. In terms of assembly, homodimer.

The protein localises to the cytoplasm. It catalyses the reaction a (3R)-hydroxyacyl-[ACP] = a (2E)-enoyl-[ACP] + H2O. The catalysed reaction is (3R)-hydroxydecanoyl-[ACP] = (2E)-decenoyl-[ACP] + H2O. The enzyme catalyses (2E)-decenoyl-[ACP] = (3Z)-decenoyl-[ACP]. Its pathway is lipid metabolism; fatty acid biosynthesis. Its function is as follows. Necessary for the introduction of cis unsaturation into fatty acids. Catalyzes the dehydration of (3R)-3-hydroxydecanoyl-ACP to E-(2)-decenoyl-ACP and then its isomerization to Z-(3)-decenoyl-ACP. Can catalyze the dehydratase reaction for beta-hydroxyacyl-ACPs with saturated chain lengths up to 16:0, being most active on intermediate chain length. This is 3-hydroxydecanoyl-[acyl-carrier-protein] dehydratase from Hyphomonas neptunium (strain ATCC 15444).